The primary structure comprises 229 residues: Cytochrome c oxidase subunit 2 (229 aa).

The Mitochondrial intermembrane segment spans residues 1 to 26; sequence MATWSNLGLQDSASPLMEQLNFFHDH. Residues 27–48 form a helical membrane-spanning segment; sequence TLLILIMITILVGYLMLMLFFN. The Mitochondrial matrix segment spans residues 49–62; sequence KFTNRFLLHGQTIE. The chain crosses the membrane as a helical span at residues 63-82; that stretch reads IIWTILPAIVLMFIALPSLR. At 83-229 the chain is on the mitochondrial intermembrane side; that stretch reads ILYLLDEINS…IKWITAMNSN (147 aa). Cu cation-binding residues include histidine 161, cysteine 196, glutamate 198, cysteine 200, histidine 204, and methionine 207. Glutamate 198 is a binding site for Mg(2+).

Belongs to the cytochrome c oxidase subunit 2 family. As to quaternary structure, component of the cytochrome c oxidase (complex IV, CIV), a multisubunit enzyme composed of a catalytic core of 3 subunits and several supernumerary subunits. The complex exists as a monomer or a dimer and forms supercomplexes (SCs) in the inner mitochondrial membrane with ubiquinol-cytochrome c oxidoreductase (cytochrome b-c1 complex, complex III, CIII). The cofactor is Cu cation.

The protein resides in the mitochondrion inner membrane. It catalyses the reaction 4 Fe(II)-[cytochrome c] + O2 + 8 H(+)(in) = 4 Fe(III)-[cytochrome c] + 2 H2O + 4 H(+)(out). In terms of biological role, component of the cytochrome c oxidase, the last enzyme in the mitochondrial electron transport chain which drives oxidative phosphorylation. The respiratory chain contains 3 multisubunit complexes succinate dehydrogenase (complex II, CII), ubiquinol-cytochrome c oxidoreductase (cytochrome b-c1 complex, complex III, CIII) and cytochrome c oxidase (complex IV, CIV), that cooperate to transfer electrons derived from NADH and succinate to molecular oxygen, creating an electrochemical gradient over the inner membrane that drives transmembrane transport and the ATP synthase. Cytochrome c oxidase is the component of the respiratory chain that catalyzes the reduction of oxygen to water. Electrons originating from reduced cytochrome c in the intermembrane space (IMS) are transferred via the dinuclear copper A center (CU(A)) of subunit 2 and heme A of subunit 1 to the active site in subunit 1, a binuclear center (BNC) formed by heme A3 and copper B (CU(B)). The BNC reduces molecular oxygen to 2 water molecules using 4 electrons from cytochrome c in the IMS and 4 protons from the mitochondrial matrix. This chain is Cytochrome c oxidase subunit 2 (COII), found in Simulium vittatum (Striped black fly).